The following is a 197-amino-acid chain: MIMRQASVQRSTSETDISVEIDLDGGGQAVVETSIPFFDHMLTLFSRHGLFNLTVKGRGDTEIDDHHLVEDMGICLGKVVKDAMGDKTGMVRYGSATIPMDETLCAVTLDVSGRPYLVYHVAFSAGARAGEFDLQLIREFFKAFSDHSGITLHINLFYGENNHHIAEAVFKAFARALSMAVSIDSRIQGVLSTKGCL.

The protein belongs to the imidazoleglycerol-phosphate dehydratase family.

The protein localises to the cytoplasm. The enzyme catalyses D-erythro-1-(imidazol-4-yl)glycerol 3-phosphate = 3-(imidazol-4-yl)-2-oxopropyl phosphate + H2O. It participates in amino-acid biosynthesis; L-histidine biosynthesis; L-histidine from 5-phospho-alpha-D-ribose 1-diphosphate: step 6/9. This chain is Imidazoleglycerol-phosphate dehydratase, found in Syntrophus aciditrophicus (strain SB).